The chain runs to 134 residues: Fluoride-specific ion channel FluC 2 (134 aa).

Transmembrane regions (helical) follow at residues 1 to 21 (MNYF…EITG), 28 to 48 (IFPV…LFFM), 68 to 88 (GFLG…LLLF), and 92 to 112 (LLIG…SGIL). Na(+)-binding residues include Gly71 and Thr74.

The protein belongs to the fluoride channel Fluc/FEX (TC 1.A.43) family.

Its subcellular location is the cell membrane. It carries out the reaction fluoride(in) = fluoride(out). With respect to regulation, na(+) is not transported, but it plays an essential structural role and its presence is essential for fluoride channel function. Its function is as follows. Fluoride-specific ion channel. Important for reducing fluoride concentration in the cell, thus reducing its toxicity. The polypeptide is Fluoride-specific ion channel FluC 2 (Carboxydothermus hydrogenoformans (strain ATCC BAA-161 / DSM 6008 / Z-2901)).